The sequence spans 383 residues: Acetylornithine deacetylase (383 aa).

Residue His80 coordinates Zn(2+). Asp82 is an active-site residue. Asp112 is a Zn(2+) binding site. Residue Glu144 is part of the active site. Zn(2+) contacts are provided by Glu145, Glu169, and His355.

Belongs to the peptidase M20A family. ArgE subfamily. In terms of assembly, homodimer. Zn(2+) serves as cofactor. Requires Co(2+) as cofactor. The cofactor is glutathione.

It is found in the cytoplasm. It catalyses the reaction N(2)-acetyl-L-ornithine + H2O = L-ornithine + acetate. Its pathway is amino-acid biosynthesis; L-arginine biosynthesis; L-ornithine from N(2)-acetyl-L-ornithine (linear): step 1/1. In terms of biological role, catalyzes the hydrolysis of the amide bond of N(2)-acetylated L-amino acids. Cleaves the acetyl group from N-acetyl-L-ornithine to form L-ornithine, an intermediate in L-arginine biosynthesis pathway, and a branchpoint in the synthesis of polyamines. This is Acetylornithine deacetylase from Shigella flexneri.